A 272-amino-acid chain; its full sequence is Proteasome assembly chaperone 1 (272 aa).

This sequence belongs to the PSMG1 family. In terms of assembly, forms a heterodimer with psmg2.

Chaperone protein which promotes assembly of the 20S proteasome as part of a heterodimer with psmg2. This chain is Proteasome assembly chaperone 1 (psmG1), found in Dictyostelium discoideum (Social amoeba).